A 135-amino-acid chain; its full sequence is Ribosome-binding factor A (135 aa).

It belongs to the RbfA family. Monomer. Binds 30S ribosomal subunits, but not 50S ribosomal subunits or 70S ribosomes.

It localises to the cytoplasm. One of several proteins that assist in the late maturation steps of the functional core of the 30S ribosomal subunit. Associates with free 30S ribosomal subunits (but not with 30S subunits that are part of 70S ribosomes or polysomes). Required for efficient processing of 16S rRNA. May interact with the 5'-terminal helix region of 16S rRNA. This is Ribosome-binding factor A from Aliivibrio fischeri (strain MJ11) (Vibrio fischeri).